A 232-amino-acid polypeptide reads, in one-letter code: Cytochrome c oxidase subunit 2 (232 aa).

Over 1–30 (MNNFFQDFNLLFSSSLFSSYMDWFYNFNCS) the chain is Mitochondrial intermembrane. Residues 31-52 (LLFGVLSFVSTMFVYLLLSSFY) traverse the membrane as a helical segment. Over 53–69 (FKSKKIEYQFGELLCSV) the chain is Mitochondrial matrix. A helical membrane pass occupies residues 70–89 (FPTLILVMQMVPSLSLLYYY). At 90 to 232 (GLMNLDSSLT…KSWCVGLLSD (143 aa)) the chain is on the mitochondrial intermembrane side. His164, Cys199, Glu201, Cys203, His207, and Met210 together coordinate Cu cation. Glu201 lines the Mg(2+) pocket.

It belongs to the cytochrome c oxidase subunit 2 family. Component of the cytochrome c oxidase (complex IV, CIV), a multisubunit enzyme composed of a catalytic core of 3 subunits and several supernumerary subunits. The complex exists as a monomer or a dimer and forms supercomplexes (SCs) in the inner mitochondrial membrane with ubiquinol-cytochrome c oxidoreductase (cytochrome b-c1 complex, complex III, CIII). It depends on Cu cation as a cofactor.

Its subcellular location is the mitochondrion inner membrane. The catalysed reaction is 4 Fe(II)-[cytochrome c] + O2 + 8 H(+)(in) = 4 Fe(III)-[cytochrome c] + 2 H2O + 4 H(+)(out). In terms of biological role, component of the cytochrome c oxidase, the last enzyme in the mitochondrial electron transport chain which drives oxidative phosphorylation. The respiratory chain contains 3 multisubunit complexes succinate dehydrogenase (complex II, CII), ubiquinol-cytochrome c oxidoreductase (cytochrome b-c1 complex, complex III, CIII) and cytochrome c oxidase (complex IV, CIV), that cooperate to transfer electrons derived from NADH and succinate to molecular oxygen, creating an electrochemical gradient over the inner membrane that drives transmembrane transport and the ATP synthase. Cytochrome c oxidase is the component of the respiratory chain that catalyzes the reduction of oxygen to water. Electrons originating from reduced cytochrome c in the intermembrane space (IMS) are transferred via the dinuclear copper A center (CU(A)) of subunit 2 and heme A of subunit 1 to the active site in subunit 1, a binuclear center (BNC) formed by heme A3 and copper B (CU(B)). The BNC reduces molecular oxygen to 2 water molecules using 4 electrons from cytochrome c in the IMS and 4 protons from the mitochondrial matrix. This is Cytochrome c oxidase subunit 2 (COII) from Ascaris suum (Pig roundworm).